The following is a 165-amino-acid chain: Endoribonuclease YbeY (165 aa).

Residues histidine 131, histidine 135, and histidine 141 each contribute to the Zn(2+) site.

It belongs to the endoribonuclease YbeY family. It depends on Zn(2+) as a cofactor.

It localises to the cytoplasm. Single strand-specific metallo-endoribonuclease involved in late-stage 70S ribosome quality control and in maturation of the 3' terminus of the 16S rRNA. The chain is Endoribonuclease YbeY from Lachnoclostridium phytofermentans (strain ATCC 700394 / DSM 18823 / ISDg) (Clostridium phytofermentans).